We begin with the raw amino-acid sequence, 542 residues long: L-ornithine N(5)-monooxygenase (542 aa).

Residues 45-53 (EKHEVFRWH) and Q64 contribute to the FAD site. K69 serves as a coordination point for substrate. An NADP(+)-binding site is contributed by 218-221 (SGQS). Substrate is bound by residues 263 to 266 (NEIF) and N294. 294–296 (NYS) lines the NADP(+) pocket. Residues 443-472 (FFHDSSPSTASSSTVSTPPTSPETSRFSSP) are disordered. Residues 447 to 472 (SSPSTASSSTVSTPPTSPETSRFSSP) are compositionally biased toward low complexity. Position 518–520 (518–520 (TLL)) interacts with FAD. Substrate is bound at residue S521.

Belongs to the lysine N(6)-hydroxylase/L-ornithine N(5)-oxygenase family. As to quaternary structure, homotetramer. The cofactor is FAD.

It carries out the reaction L-ornithine + NADPH + O2 = N(5)-hydroxy-L-ornithine + NADP(+) + H2O. The enzyme catalyses L-ornithine + NADH + O2 = N(5)-hydroxy-L-ornithine + NAD(+) + H2O. Its pathway is siderophore biosynthesis. Functionally, L-ornithine N(5)-monooxygenase; part of the gene cluster that mediates the biosynthesis of coprinoferrin, an acylated tripeptide hydroxamate siderophore. The biosynthesis of coprinoferrin depends on the hydroxylation of ornithine to N(5)-hydroxyornithine, catalyzed by the monooxygenase cpf2. The second step, the acylation of N(5)-hydroxy-L-ornithine to yield N(5)-hexanoyl-N(5)-hydroxyl-L-ornithine is catalyzed by a not yet identified acyltransferase. Finally, assembly of coprinoferrin is catalyzed by the nonribosomal peptide synthase (NRPS) cpf1 via amide bond formation between three N(5)-hexanoyl-N(5)-hydroxyl-L-ornithine molecules to release the linear trimer. Interestingly, proteins seemingly not directly related to biosynthesis, such as transcription factors, replication factors, and autophagy-related proteins, are conserved among the clusters homologous to the coprinoferrin cluster, suggesting that the cluster may also play developmental and cell biological functions. This chain is L-ornithine N(5)-monooxygenase, found in Coprinopsis cinerea (strain Okayama-7 / 130 / ATCC MYA-4618 / FGSC 9003) (Inky cap fungus).